A 314-amino-acid polypeptide reads, in one-letter code: Methionyl-tRNA formyltransferase (314 aa).

110–113 (SLLP) is a binding site for (6S)-5,6,7,8-tetrahydrofolate.

It belongs to the Fmt family.

It carries out the reaction L-methionyl-tRNA(fMet) + (6R)-10-formyltetrahydrofolate = N-formyl-L-methionyl-tRNA(fMet) + (6S)-5,6,7,8-tetrahydrofolate + H(+). In terms of biological role, attaches a formyl group to the free amino group of methionyl-tRNA(fMet). The formyl group appears to play a dual role in the initiator identity of N-formylmethionyl-tRNA by promoting its recognition by IF2 and preventing the misappropriation of this tRNA by the elongation apparatus. In Bacillus cereus (strain B4264), this protein is Methionyl-tRNA formyltransferase.